The chain runs to 172 residues: Shikimate kinase (172 aa).

14–19 is an ATP binding site; the sequence is GAGKST. Ser-18 contacts Mg(2+). Residues Asp-36, Arg-60, and Gly-82 each coordinate substrate. Residue Arg-120 participates in ATP binding. Residue Arg-140 participates in substrate binding.

It belongs to the shikimate kinase family. In terms of assembly, monomer. It depends on Mg(2+) as a cofactor.

It localises to the cytoplasm. It catalyses the reaction shikimate + ATP = 3-phosphoshikimate + ADP + H(+). It participates in metabolic intermediate biosynthesis; chorismate biosynthesis; chorismate from D-erythrose 4-phosphate and phosphoenolpyruvate: step 5/7. Functionally, catalyzes the specific phosphorylation of the 3-hydroxyl group of shikimic acid using ATP as a cosubstrate. The polypeptide is Shikimate kinase (Tolumonas auensis (strain DSM 9187 / NBRC 110442 / TA 4)).